The primary structure comprises 705 residues: Translation initiation factor IF-2 (705 aa).

The interval 40–124 is disordered; the sequence is DDQIKALDKK…QPAAPKEIPS (85 aa). Basic and acidic residues predominate over residues 41–58; it reads DQIKALDKKFKKEQKNDN. Residues 59–77 are compositionally biased toward low complexity; the sequence is KQSTQNNHQKSNNQNQNKG. Positions 94 to 108 are enriched in basic residues; it reads KGNKKNNRNNKKNNK. The tr-type G domain maps to 207–376; sequence ERPAVVTIMG…GLVAEVQELK (170 aa). The segment at 216–223 is G1; the sequence is GHVDHGKT. 216–223 is a binding site for GTP; that stretch reads GHVDHGKT. The tract at residues 241–245 is G2; sequence GITQH. Residues 262–265 form a G3 region; it reads DTPG. GTP-binding positions include 262-266 and 316-319; these read DTPGH and NKID. The segment at 316 to 319 is G4; the sequence is NKID. The interval 352–354 is G5; it reads SAL.

This sequence belongs to the TRAFAC class translation factor GTPase superfamily. Classic translation factor GTPase family. IF-2 subfamily.

It localises to the cytoplasm. One of the essential components for the initiation of protein synthesis. Protects formylmethionyl-tRNA from spontaneous hydrolysis and promotes its binding to the 30S ribosomal subunits. Also involved in the hydrolysis of GTP during the formation of the 70S ribosomal complex. The protein is Translation initiation factor IF-2 of Staphylococcus aureus (strain MRSA252).